Here is a 534-residue protein sequence, read N- to C-terminus: Lysophosphatidylcholine acyltransferase 1 (534 aa).

The tract at residues 1–25 (MRLRGRGPRAAPSSSSGAGDARRLA) is disordered. Over 1–57 (MRLRGRGPRAAPSSSSGAGDARRLAPPGRNPFVHELRLSALQKAQVAFMTLTLFPIR) the chain is Cytoplasmic. Positions 8 to 19 (PRAAPSSSSGAG) are enriched in low complexity. The chain crosses the membrane as a helical; Signal-anchor for type II membrane protein span at residues 58–78 (LLFAAFMMLLAWPFALVASLG). The Lumenal segment spans residues 79-534 (PPDKEPEQPL…GRKNSCKKVD (456 aa)). The short motif at 135–140 (HSSYFD) is the HXXXXD motif element. 2 EF-hand domains span residues 379 to 414 (PVSD…VCRP) and 451 to 486 (ISEL…YPDF). Ca(2+) contacts are provided by aspartate 392, serine 394, glutamate 398, and glutamate 403. Residues 531 to 534 (KKVD) carry the Di-lysine motif motif.

The protein belongs to the 1-acyl-sn-glycerol-3-phosphate acyltransferase family. In terms of tissue distribution, enriched in alveolar type II cells of lung. Also highly expressed in stomach.

Its subcellular location is the endoplasmic reticulum membrane. It localises to the golgi apparatus membrane. The protein resides in the cell membrane. It is found in the lipid droplet. The catalysed reaction is a 1-acyl-sn-glycero-3-phosphocholine + an acyl-CoA = a 1,2-diacyl-sn-glycero-3-phosphocholine + CoA. It carries out the reaction a 1-O-alkyl-sn-glycero-3-phosphocholine + acetyl-CoA = a 1-O-alkyl-2-acetyl-sn-glycero-3-phosphocholine + CoA. It catalyses the reaction a 1-acyl-sn-glycero-3-phosphate + an acyl-CoA = a 1,2-diacyl-sn-glycero-3-phosphate + CoA. The enzyme catalyses a 1-O-(1Z-alkenyl)-sn-glycero-3-phosphocholine + an acyl-CoA = a 1-O-(1Z-alkenyl)-2-acyl-sn-glycero-3-phosphocholine + CoA. The catalysed reaction is 1-acyl-sn-glycero-3-phospho-(1'-sn-glycerol) + an acyl-CoA = a 1,2-diacyl-sn-glycero-3-phospho-(1'-sn-glycerol) + CoA. It carries out the reaction a 1-acyl-sn-glycero-3-phosphocholine + hexadecanoyl-CoA = 1-acyl-2-hexadecanoyl-sn-glycero-3-phosphocholine + CoA. It catalyses the reaction a 1-acyl-sn-glycero-3-phosphate + hexadecanoyl-CoA = 1-acyl-2-hexadecanoyl-sn-glycero-3-phosphate + CoA. The enzyme catalyses 1-acyl-sn-glycero-3-phospho-(1'-sn-glycerol) + hexadecanoyl-CoA = 1-acyl-2-hexadecanoyl-sn-glycero-3-phospho-(1'-sn-glycerol) + CoA. The catalysed reaction is 1-hexadecanoyl-sn-glycero-3-phosphocholine + hexadecanoyl-CoA = 1,2-dihexadecanoyl-sn-glycero-3-phosphocholine + CoA. It carries out the reaction 1-O-hexadecyl-sn-glycero-3-phosphocholine + hexadecanoyl-CoA = 1-O-hexadecyl-2-hexadecanoyl-sn-glycero-3-phosphocholine + CoA. It catalyses the reaction a 1-O-(1Z-alkenyl)-sn-glycero-3-phosphocholine + hexadecanoyl-CoA = 1-O-(1Z)-alkenyl-2-hexadecanoyl-sn-glycero-3-phosphocholine + CoA. The enzyme catalyses 1-hexadecanoyl-sn-glycero-3-phospho-(1'-sn-glycerol) + hexadecanoyl-CoA = 1,2-dihexadecanoyl-sn-glycero-3-phospho-(1'-sn-glycerol) + CoA. The catalysed reaction is 1-dodecanoyl-sn-glycero-3-phosphocholine + hexadecanoyl-CoA = 1-dodecanoyl-2-hexadecanoyl-sn-glycero-3-phosphocholine + CoA. It carries out the reaction 1-tetradecanoyl-sn-glycero-3-phosphocholine + hexadecanoyl-CoA = 1-tetradecanoyl-2-hexadecanoyl-sn-glycero-3-phosphocholine + CoA. It catalyses the reaction 1-O-octadecyl-sn-glycero-3-phosphocholine + hexadecanoyl-CoA = 1-O-octadecyl-2-hexadecanoyl-sn-glycero-3-phosphocholine + CoA. The enzyme catalyses 1-octadecanoyl-sn-glycero-3-phosphocholine + hexadecanoyl-CoA = 1-octadecanoyl-2-hexadecanoyl-sn-glycero-3-phosphocholine + CoA. The catalysed reaction is 1-(9Z-octadecenoyl)-sn-glycero-3-phosphocholine + hexadecanoyl-CoA = 1-(9Z-octadecenoyl)-2-hexadecanoyl-sn-glycero-3-phosphocholine + CoA. It carries out the reaction 1-eicosanoyl-sn-glycero-3-phosphocholine + hexadecanoyl-CoA = 1-eicosanoyl-2-hexadecanoyl-sn-glycero-3-phosphocholine + CoA. It catalyses the reaction hexanoyl-CoA + 1-hexadecanoyl-sn-glycero-3-phosphocholine = 1-hexadecanoyl-2-hexanoyl-sn-glycero-3-phosphocholine + CoA. The enzyme catalyses octanoyl-CoA + 1-hexadecanoyl-sn-glycero-3-phosphocholine = 1-hexadecanoyl-2-octanoyl-sn-glycero-3-phosphocholine + CoA. The catalysed reaction is decanoyl-CoA + 1-hexadecanoyl-sn-glycero-3-phosphocholine = 1-hexadecanoyl-2-decanoyl-sn-glycero-3-phosphocholine + CoA. It carries out the reaction dodecanoyl-CoA + 1-hexadecanoyl-sn-glycero-3-phosphocholine = 1-hexadecanoyl-2-dodecanoyl-sn-glycero-3-phosphocholine + CoA. It catalyses the reaction tetradecanoyl-CoA + 1-hexadecanoyl-sn-glycero-3-phosphocholine = 1-hexadecanoyl-2-tetradecanoyl-sn-glycero-3-phosphocholine + CoA. The enzyme catalyses 1-hexadecanoyl-sn-glycero-3-phosphocholine + (9Z)-octadecenoyl-CoA = 1-hexadecanoyl-2-(9Z-octadecenoyl)-sn-glycero-3-phosphocholine + CoA. The catalysed reaction is (9Z,12Z)-octadecadienoyl-CoA + 1-hexadecanoyl-sn-glycero-3-phosphocholine = 1-hexadecanoyl-2-(9Z,12Z-octadecadienoyl)-sn-glycero-3-phosphocholine + CoA. It carries out the reaction (4Z,7Z,10Z,13Z,16Z,19Z)-docosahexaenoyl-CoA + 1-hexadecanoyl-sn-glycero-3-phosphocholine = 1-hexadecanoyl-2-(4Z,7Z,10Z,13Z,16Z,19Z-docosahexaenoyl)-sn-glycero-3-phosphocholine + CoA. It catalyses the reaction 1-hexadecanoyl-sn-glycero-3-phosphocholine + acetyl-CoA = 1-hexadecanoyl-2-acetyl-sn-glycero-3-phosphocholine + CoA. The enzyme catalyses eicosanoyl-CoA + 1-hexadecanoyl-sn-glycero-3-phosphocholine = 1-hexadecanoyl-2-eicosanoyl-sn-glycero-3-phosphocholine + CoA. The catalysed reaction is 1-O-hexadecyl-sn-glycero-3-phosphocholine + acetyl-CoA = 1-O-hexadecyl-2-acetyl-sn-glycero-3-phosphocholine + CoA. It participates in lipid metabolism; phospholipid metabolism. Its activity is regulated as follows. Activity is stimulated by Mg(2+) or Mn(2+). Its function is as follows. Exhibits acyltransferase activity. Exhibits acetyltransferase activity. Activity is calcium-independent. Catalyzes the conversion of lysophosphatidylcholine (1-acyl-sn-glycero-3-phosphocholine or LPC) into phosphatidylcholine (1,2-diacyl-sn-glycero-3-phosphocholine or PC). Catalyzes the conversion 1-acyl-sn-glycerol-3-phosphate (lysophosphatidic acid or LPA) into 1,2-diacyl-sn-glycerol-3-phosphate (phosphatidic acid or PA) by incorporating an acyl moiety at the sn-2 position of the glycerol backbone. Displays a clear preference for saturated fatty acyl-CoAs, and 1-myristoyl or 1-palmitoyl LPC as acyl donors and acceptors, respectively. Involved in platelet-activating factor (PAF) biosynthesis by catalyzing the conversion of the PAF precursor, 1-O-alkyl-sn-glycero-3-phosphocholine (lyso-PAF) into 1-O-alkyl-2-acetyl-sn-glycero-3-phosphocholine (PAF). May synthesize phosphatidylcholine in pulmonary surfactant, thereby playing a pivotal role in respiratory physiology. Involved in the regulation of lipid droplet number and size. The polypeptide is Lysophosphatidylcholine acyltransferase 1 (Lpcat1) (Rattus norvegicus (Rat)).